A 242-amino-acid polypeptide reads, in one-letter code: Phosphate import ATP-binding protein PstB 1 (242 aa).

Residues 1–237 (MDLYYGSYRA…PKDQRTEDYI (237 aa)) enclose the ABC transporter domain. Residue 28–35 (GPSGCGKS) coordinates ATP.

Belongs to the ABC transporter superfamily. Phosphate importer (TC 3.A.1.7) family. As to quaternary structure, the complex is composed of two ATP-binding proteins (PstB), two transmembrane proteins (PstC and PstA) and a solute-binding protein (PstS).

It is found in the cell membrane. It catalyses the reaction phosphate(out) + ATP + H2O = ADP + 2 phosphate(in) + H(+). Functionally, part of the ABC transporter complex PstSACB involved in phosphate import. Responsible for energy coupling to the transport system. This is Phosphate import ATP-binding protein PstB 1 from Symbiobacterium thermophilum (strain DSM 24528 / JCM 14929 / IAM 14863 / T).